The following is a 318-amino-acid chain: Glutathione synthetase (318 aa).

Residues 124–310 enclose the ATP-grasp domain; the sequence is EKLFTAWFPE…ITGKLMDAIE (187 aa). 150–207 is a binding site for ATP; sequence FREQHGDVILKPLDGMGGASIFRVKEGDPNLSVIIETLTNHGQNYCMAQTFVPDISNG. Mg(2+) is bound by residues Glu281 and Asn283.

Belongs to the prokaryotic GSH synthase family. Mg(2+) is required as a cofactor. Mn(2+) serves as cofactor.

It catalyses the reaction gamma-L-glutamyl-L-cysteine + glycine + ATP = glutathione + ADP + phosphate + H(+). Its pathway is sulfur metabolism; glutathione biosynthesis; glutathione from L-cysteine and L-glutamate: step 2/2. This is Glutathione synthetase from Vibrio cholerae serotype O1 (strain ATCC 39315 / El Tor Inaba N16961).